A 138-amino-acid polypeptide reads, in one-letter code: Putative nickel-responsive regulator (138 aa).

Ni(2+) contacts are provided by His78, His89, His91, and Cys97.

The protein belongs to the transcriptional regulatory CopG/NikR family. It depends on Ni(2+) as a cofactor.

Transcriptional regulator. This is Putative nickel-responsive regulator from Desulfovibrio desulfuricans (strain ATCC 27774 / DSM 6949 / MB).